The sequence spans 360 residues: Phosphoserine aminotransferase (360 aa).

Residue arginine 41 coordinates L-glutamate. 4 residues coordinate pyridoxal 5'-phosphate: tryptophan 101, threonine 152, aspartate 172, and glutamine 195. The residue at position 196 (lysine 196) is an N6-(pyridoxal phosphate)lysine. A pyridoxal 5'-phosphate-binding site is contributed by 237–238 (NT).

Belongs to the class-V pyridoxal-phosphate-dependent aminotransferase family. SerC subfamily. Homodimer. Pyridoxal 5'-phosphate is required as a cofactor.

Its subcellular location is the cytoplasm. It carries out the reaction O-phospho-L-serine + 2-oxoglutarate = 3-phosphooxypyruvate + L-glutamate. The catalysed reaction is 4-(phosphooxy)-L-threonine + 2-oxoglutarate = (R)-3-hydroxy-2-oxo-4-phosphooxybutanoate + L-glutamate. The protein operates within amino-acid biosynthesis; L-serine biosynthesis; L-serine from 3-phospho-D-glycerate: step 2/3. Its pathway is cofactor biosynthesis; pyridoxine 5'-phosphate biosynthesis; pyridoxine 5'-phosphate from D-erythrose 4-phosphate: step 3/5. Catalyzes the reversible conversion of 3-phosphohydroxypyruvate to phosphoserine and of 3-hydroxy-2-oxo-4-phosphonooxybutanoate to phosphohydroxythreonine. The polypeptide is Phosphoserine aminotransferase (Burkholderia vietnamiensis (strain G4 / LMG 22486) (Burkholderia cepacia (strain R1808))).